Here is a 719-residue protein sequence, read N- to C-terminus: Transcription factor E4F1 (719 aa).

Positions 20–63 (NIITIQTTLGDEDEDIHKCGKCLAEFSALDAFIQHKLSRSCKRT) are required for ubiquitin ligase activity. Residues 59 to 125 (SCKRTQDPQT…SEDESSSPSK (67 aa)) form a disordered region. Basic and acidic residues predominate over residues 98 to 109 (EKQDAKVASGDK). Residues 128-207 (WKLNTEGRYV…GLAFRESGAL (80 aa)) form a mediates dimerization and DNA-binding region. 2 C2H2-type zinc fingers span residues 136-158 (YVCD…MFTH) and 164-186 (FVCE…KRRH). The segment at 192–216 (YRCNQCGLAFRESGALTRHLKSLTP) adopts a C2H2-type 3; degenerate zinc-finger fold. 5 consecutive C2H2-type zinc fingers follow at residues 365-387 (YKCP…VKGH), 393-415 (FKCL…METH), 421-443 (YKCG…MRAH), 449-471 (YHCS…HRTH), and 477-499 (YVCQ…IRHH). The C2H2-type 9; degenerate zinc-finger motif lies at 505–527 (FKCSKCGRGFAEHGTLNRHLRAK).

The protein resides in the nucleus. Its subcellular location is the nucleoplasm. The protein localises to the cytoplasm. It carries out the reaction S-ubiquitinyl-[E2 ubiquitin-conjugating enzyme]-L-cysteine + [acceptor protein]-L-lysine = [E2 ubiquitin-conjugating enzyme]-L-cysteine + N(6)-ubiquitinyl-[acceptor protein]-L-lysine.. Its pathway is protein modification; protein ubiquitination. In terms of biological role, may function as a transcriptional repressor. May also function as a ubiquitin ligase. Functions in cell survival and proliferation through control of the cell cycle. The protein is Transcription factor E4F1 (e4f1) of Danio rerio (Zebrafish).